The following is a 348-amino-acid chain: Dihydroorotase (348 aa).

His14 and His16 together coordinate Zn(2+). Residues 16-18 (HLR) and Asn42 contribute to the substrate site. Zn(2+) contacts are provided by Lys100, His137, and His175. N6-carboxylysine is present on Lys100. His137 contacts substrate. Leu220 is a substrate binding site. Position 248 (Asp248) interacts with Zn(2+). The active site involves Asp248. Residues His252 and Ala264 each contribute to the substrate site.

This sequence belongs to the metallo-dependent hydrolases superfamily. DHOase family. Class II DHOase subfamily. Homodimer. Zn(2+) is required as a cofactor.

It catalyses the reaction (S)-dihydroorotate + H2O = N-carbamoyl-L-aspartate + H(+). The protein operates within pyrimidine metabolism; UMP biosynthesis via de novo pathway; (S)-dihydroorotate from bicarbonate: step 3/3. In terms of biological role, catalyzes the reversible cyclization of carbamoyl aspartate to dihydroorotate. The polypeptide is Dihydroorotase (Pseudomonas entomophila (strain L48)).